Reading from the N-terminus, the 439-residue chain is Xylose isomerase (439 aa).

Catalysis depends on residues His-101 and Asp-104. Mg(2+) contacts are provided by Glu-232, Glu-268, His-271, Asp-296, Asp-307, Asp-309, and Asp-339.

Belongs to the xylose isomerase family. Homotetramer. Requires Mg(2+) as cofactor.

It is found in the cytoplasm. The catalysed reaction is alpha-D-xylose = alpha-D-xylulofuranose. In Lactococcus lactis subsp. lactis (strain IL1403) (Streptococcus lactis), this protein is Xylose isomerase (xylA).